A 140-amino-acid polypeptide reads, in one-letter code: MKEKIPFYNEKEFHDMMKKTKKGTFSGWYIIDKDNKSVEFSGNFNRQFKLNKPVIPVNTEYVTRKEFNEYKDSNDQRLTKIETTLAAQGEQIRIQGEQIKELQIEQKAQGETLKLILQTLQKMSDRLNKMDVRLDKLESK.

Belongs to the UPF0134 family.

This chain is UPF0134 protein MPN_094, found in Mycoplasma pneumoniae (strain ATCC 29342 / M129 / Subtype 1) (Mycoplasmoides pneumoniae).